Here is a 1166-residue protein sequence, read N- to C-terminus: MINVMYKNSCPNCGGDISGDRLLNGLPCEACLPYINGIDDVDHISKVKTLYNILLNNDKIKNYWNLYYNITTFETVFKYFRDKTGYEPWSLQKLWLRRLASNQSFTMSAPTGLGKTTTLMTYSVFIGQDVVYIVPTKSLMEQVCKRLEKLGAQVSCGKIDQKKVSVITISYLNKNADSIVSLKPNFVVIDDADAVIKSGKTTDRLVSLLGIPKDVYESAIQLIRLRNKYYFSNEYTEEVKEKIRELELKIAEFKDKISQLVIASATIRPKGIKQKALRLLTGFEPSSIQLYARNIIDAYTENLDLSIVKELGSGGLILVSKEYGRSKLNEIKKYVEDLGFNAKLAISGRKFLDDFSQGKVDILVGSASYYGVAVRGIDEPKRLKYVIYYGVPKIRAKLFDALSNPFTLLRVGKLIGIDFSKLQNKILILNPSEVQLLKFSIIKGESINYHKLEQLRQELLYYMSLVKDKLKEKVEDTLISDSFVITKQNGNYYIVYPDMITYLQGSGRASRLYNGGLTLGFSIILVDDRHIFEILEKKMQKLFPNTTFTSLSNTNLSEIKIKLEDSRKEEGNRVHFNISTGLLIVESPTKAKTIAKMFSRPSVRIRNKVPVYETIIVDGNQIYVLDIVASKGHIVDLTLEDIGYYGIKVEDDGTIKPYYDLIKKCLDCNKIFSSASDKCPYCGSANLQSAQTTINLLRELALSVDKVFIASDPDTEGEKIAYDLASFLSPYNSNVYRVVYHEITKKAILEALRNPKKINTNLVMSQIVRRIEDRWIGFTLSNLLKTKFNGHNHGAGRVQTPVLGWIVNKTIKYKSAMGHVVYIDIAGYSIKKYFSEKRKVEEYINNLQVARIEKISEEKILLSPLPPFTTDTLLIEANMKYKLPANLVMKIAQDLFEAGLITYHRTDSTHISSVGIEIAKEYLQKQALIKEFVPRSWESSEEGAHEAIRPTRAIDVNELIQEIEENPYKYSIRFSKLHLLIYDLIFKRFIASQMSHAVGTKSRYLIKLGKDDNVDVELLSNAEGGFIKVYPVKVYNLPVGEIQPKVNITKGSSEQLLSYSDVISLMKSKGIGRPSTYAKTIENLMKHGYIVSSKRKSYLIATNRGISVYQFLSSKFYDLVSESTTSRLMTKLDDIALSKLNASTVLLEIFSEISTLVNPLKSEQNV.

The RG N-terminal-type zinc finger occupies 1 to 40 (MINVMYKNSCPNCGGDISGDRLLNGLPCEACLPYINGIDD). Zn(2+) contacts are provided by C10, C13, C28, and C31. ATP-binding positions include Q92 and 109–116 (APTGLGKT). Positions 96 to 285 (LRRLASNQSF…ALRLLTGFEP (190 aa)) constitute a Helicase ATP-binding domain. The short motif at 190–193 (DDAD) is the DEAD box element. Residues 576–1166 (FNISTGLLIV…VNPLKSEQNV (591 aa)) are topoisomerase I. One can recognise a Toprim domain in the interval 580–743 (TGLLIVESPT…NVYRVVYHEI (164 aa)). E586 is a binding site for Mg(2+). The RG C-terminal-type zinc-finger motif lies at 662-689 (IKKCLDCNKIFSSASDKCPYCGSANLQS). The Zn(2+) site is built by C665, C668, C679, and C682. Position 712 (D712) interacts with Mg(2+). A Topo IA-type catalytic domain is found at 759–1157 (NTNLVMSQIV…EIFSEISTLV (399 aa)). The active-site O-(5'-phospho-DNA)-tyrosine intermediate is the Y903.

It in the N-terminal section; belongs to the DEAD box helicase family. DDVD subfamily. The protein in the C-terminal section; belongs to the type IA topoisomerase family. Monomer. Zn(2+) serves as cofactor. The cofactor is Mg(2+).

Its subcellular location is the cytoplasm. The catalysed reaction is ATP + H2O = ADP + phosphate + H(+). At least one of the 2 proteins is inhibited by actinomycin D. Less sensitive to NaCl than TopR1, maximal positive supercoiling is observed with 100 mM NaCl; as NaCl rises higher than 400 mM supercoiling decreases. At 600 mM NaCl relaxes but does not introduce positive supercoils into negatively supercoiled substrate. In terms of biological role, modifies the topological state of DNA by introducing positive supercoils in an ATP-dependent process. A highly processive enzyme, it introduces a large number of positive supercoils directly in a negatively supercoiled substrate. At 75 degrees Celsius introduces more than 23 positive supercoils into pTZ18R DNA (probably 2860 bp), more than TopR1; unlike TopR1 little to no relaxation of the negatively supercoiled substrate is seen in the presence of ATP, in the absence of ATP no activity is seen. At 45 degrees Celsius the enzyme is slower and in vitro individual steps can be detected. It cleaves transiently a single DNA strand and remains covalently bound to the 5' DNA end through a tyrosine residue. May be involved in DNA damage response. May be involved in rewinding the DNA strands in the regions of the chromosome that have opened up to allow transcription or replication. Functionally, there are 2 genes for this protein in the cell. During exponential growth this is the more highly expressed isoform (about 125 molecules per cell at 80 degrees Celsius, about 117 molecules at 88 degrees Celsius); this isoform is less active at higher temperature. Grows actively at both 80 and 88 degrees Celsius; survives a long exposure at 45 degrees Celsius without DNA replication or cell division occurring. Experiments using whole cell extracts do not distinguish which isoform is present, the results are probably a mixture of the two forms. This is Reverse gyrase 2 from Saccharolobus solfataricus (strain ATCC 35092 / DSM 1617 / JCM 11322 / P2) (Sulfolobus solfataricus).